The sequence spans 65 residues: Small ribosomal subunit protein bS21 (65 aa).

The segment at 44 to 65 (DDRLKRSRGKRRAQRANEERNS) is disordered. The span at 48-57 (KRSRGKRRAQ) shows a compositional bias: basic residues.

Belongs to the bacterial ribosomal protein bS21 family.

The sequence is that of Small ribosomal subunit protein bS21 from Prosthecochloris aestuarii (strain DSM 271 / SK 413).